The primary structure comprises 659 residues: Ion-translocating oxidoreductase complex subunit C (659 aa).

4Fe-4S ferredoxin-type domains follow at residues 366-397 and 407-436; these read TEMG…QQLY and KARN…VQYY. Residues C377, C380, C383, C387, C416, C419, C422, and C426 each contribute to the [4Fe-4S] cluster site.

Belongs to the 4Fe4S bacterial-type ferredoxin family. RnfC subfamily. As to quaternary structure, the complex is composed of six subunits: RnfA, RnfB, RnfC, RnfD, RnfE and RnfG. The cofactor is [4Fe-4S] cluster.

The protein localises to the cell inner membrane. In terms of biological role, part of a membrane-bound complex that couples electron transfer with translocation of ions across the membrane. This chain is Ion-translocating oxidoreductase complex subunit C, found in Yersinia pseudotuberculosis serotype IB (strain PB1/+).